The sequence spans 216 residues: MADLFSGLVGGVVGAVAAADLPAEGERAPRPAPGTAWTCCCSKLQEGARELEGFVQQLSFVAGKLACCLRVGAEQLARCAAEGRLPSSSSSSSCCALLQLEKQDLEQSLEAGKQGAECLLRSSKLALEALLEGARVAATRGLLLVESSKDTVLRSIPHTQEKLAQAYSSFLRGYQGAAAGRSLGYGAPAAAYGQQQQPSSYGAPPASSQQPSGFFW.

Residues 194 to 216 (QQQQPSSYGAPPASSQQPSGFFW) are disordered.

This Eimeria tenella (Coccidian parasite) protein is Sporozoite antigen.